A 286-amino-acid chain; its full sequence is Nucleotide-binding protein VC0395_A2112/VC395_2645 (286 aa).

8-15 (GQSGAGKS) is a binding site for ATP. Residue 56–59 (DIRN) coordinates GTP.

Belongs to the RapZ-like family.

Displays ATPase and GTPase activities. The sequence is that of Nucleotide-binding protein VC0395_A2112/VC395_2645 from Vibrio cholerae serotype O1 (strain ATCC 39541 / Classical Ogawa 395 / O395).